Consider the following 303-residue polypeptide: MNIKIASRNSALALWQTHHIRDLLIAQGHSVEIITMKTKGDVILDTPLAKIGGKGLFTKELENSMLEGSADIAVHSLKDVPTTFPDGLKLACVCSREDVRDAMLSMKYKNLDELPQGAKVGTTSLRRKMQILAHRADLDIISLRGNVNSRIAKLKNGEFDAIILAMAGINRLNLSKEVKFTSAIDTIPAMGQGALGIEAIDKKEILDAIEFLNDEKSVVETTIERDFVHTLNGGCQAPIGINAKLKGDKIEVEAILGLVDGSEILRDSKTYPKLAYKIAGKNFADEFIARGAKELLKRAEEMV.

Cys235 bears the S-(dipyrrolylmethanemethyl)cysteine mark.

The protein belongs to the HMBS family. Monomer. It depends on dipyrromethane as a cofactor.

It catalyses the reaction 4 porphobilinogen + H2O = hydroxymethylbilane + 4 NH4(+). Its pathway is porphyrin-containing compound metabolism; protoporphyrin-IX biosynthesis; coproporphyrinogen-III from 5-aminolevulinate: step 2/4. In terms of biological role, tetrapolymerization of the monopyrrole PBG into the hydroxymethylbilane pre-uroporphyrinogen in several discrete steps. The polypeptide is Porphobilinogen deaminase (Campylobacter fetus subsp. fetus (strain 82-40)).